The following is a 515-amino-acid chain: 3-[(3aS,4S,7aS)-7a-methyl-1,5-dioxo-octahydro-1H-inden-4-yl]propanoyl:CoA ligase (515 aa).

ATP is bound by residues threonine 185–lysine 193, aspartate 398, arginine 413, and lysine 504.

Belongs to the ATP-dependent AMP-binding enzyme family.

It catalyses the reaction 3-[(3aS,4S,7aS)-7a-methyl-1,5-dioxo-octahydro-1H-inden-4-yl]propanoate + ATP + CoA = 3-[(3aS,4S,7aS)-7a-methyl-1,5-dioxo-octahydro-1H-inden-4-yl]propanoyl-CoA + AMP + diphosphate. In terms of biological role, involved in the catabolism of the rings C and D of cholesterol. Catalyzes the ATP-dependent CoA thioesterification of 3aalpha-H-4alpha(3'-propanoate)-7abeta-methylhexahydro-1,5-indanedione (HIP). The chain is 3-[(3aS,4S,7aS)-7a-methyl-1,5-dioxo-octahydro-1H-inden-4-yl]propanoyl:CoA ligase from Rhodococcus jostii (strain RHA1).